The sequence spans 341 residues: Hyaluronan and proteoglycan link protein 2 (341 aa).

An N-terminal signal peptide occupies residues 1-27; the sequence is MPSRIPLPAFCCFLLPWAFTSFHKALG. An Ig-like V-type domain is found at 35 to 143; that stretch reads PHYLLPPIHE…GIEDESVALT (109 aa). Intrachain disulfides connect cysteine 58–cysteine 129, cysteine 171–cysteine 241, cysteine 195–cysteine 216, cysteine 266–cysteine 337, and cysteine 291–cysteine 312. 2 Link domains span residues 149–243 and 246–339; these read VVFP…FCFT and LAGQ…YCYA.

It belongs to the HAPLN family. As to expression, brain. Predominantly expressed by neurons. Colocalizes with versican V2 in developing and adult cerebellar white matter and at the nodes of Ranvier.

The protein resides in the secreted. It localises to the extracellular space. Its subcellular location is the extracellular matrix. Mediates a firm binding of versican V2 to hyaluronic acid. May play a pivotal role in the formation of the hyaluronan-associated matrix in the central nervous system (CNS) which facilitates neuronal conduction and general structural stabilization. Binds to hyaluronic acid. The chain is Hyaluronan and proteoglycan link protein 2 (Hapln2) from Mus musculus (Mouse).